A 301-amino-acid polypeptide reads, in one-letter code: 4-diphosphocytidyl-2-C-methyl-D-erythritol kinase (301 aa).

Lys18 is an active-site residue. Position 103-113 (Pro103–Ala113) interacts with ATP. Asp145 is an active-site residue.

It belongs to the GHMP kinase family. IspE subfamily.

It carries out the reaction 4-CDP-2-C-methyl-D-erythritol + ATP = 4-CDP-2-C-methyl-D-erythritol 2-phosphate + ADP + H(+). It participates in isoprenoid biosynthesis; isopentenyl diphosphate biosynthesis via DXP pathway; isopentenyl diphosphate from 1-deoxy-D-xylulose 5-phosphate: step 3/6. Its function is as follows. Catalyzes the phosphorylation of the position 2 hydroxy group of 4-diphosphocytidyl-2C-methyl-D-erythritol. This Bradyrhizobium sp. (strain BTAi1 / ATCC BAA-1182) protein is 4-diphosphocytidyl-2-C-methyl-D-erythritol kinase.